Here is a 217-residue protein sequence, read N- to C-terminus: Ras-related protein Rab-19 (217 aa).

GTP-binding residues include Ser-26, Val-28, Gly-29, Lys-30, Thr-31, Cys-32, Tyr-42, Glu-44, and Thr-49. Thr-31 serves as a coordination point for Mg(2+). Positions 39-54 (SGVYMEAQQNTIGVDF) match the Switch 1 motif. 2 residues coordinate Mg(2+): Thr-49 and Asp-72. The short motif at 74-89 (AGQERFRTITQSYYRS) is the Switch 2 element. GTP contacts are provided by Gly-75, Asn-130, Lys-131, Asp-133, Ser-161, Ala-162, and Lys-163. 2 S-geranylgeranyl cysteine lipidation sites follow: Cys-215 and Cys-217. The residue at position 217 (Cys-217) is a Cysteine methyl ester.

Belongs to the small GTPase superfamily. Rab family. Mg(2+) serves as cofactor.

Its subcellular location is the cell membrane. The catalysed reaction is GTP + H2O = GDP + phosphate + H(+). Its activity is regulated as follows. Regulated by guanine nucleotide exchange factors (GEFs) which promote the exchange of bound GDP for free GTP. Regulated by GTPase activating proteins (GAPs) which increase the GTP hydrolysis activity. Inhibited by GDP dissociation inhibitors (GDIs). In terms of biological role, the small GTPases Rab are key regulators of intracellular membrane trafficking, from the formation of transport vesicles to their fusion with membranes. Rabs cycle between an inactive GDP-bound form and an active GTP-bound form that is able to recruit to membranes different set of downstream effectors directly responsible for vesicle formation, movement, tethering and fusion. This Bos taurus (Bovine) protein is Ras-related protein Rab-19 (RAB19).